The following is a 429-amino-acid chain: UDP-N-acetylglucosamine 1-carboxyvinyltransferase (429 aa).

22–23 (KN) contacts phosphoenolpyruvate. Residue Arg-102 participates in UDP-N-acetyl-alpha-D-glucosamine binding. Cys-126 functions as the Proton donor in the catalytic mechanism. 2-(S-cysteinyl)pyruvic acid O-phosphothioketal is present on Cys-126. UDP-N-acetyl-alpha-D-glucosamine contacts are provided by residues 131–135 (RPVDL), Asp-316, and Ile-338.

The protein belongs to the EPSP synthase family. MurA subfamily.

The protein localises to the cytoplasm. The catalysed reaction is phosphoenolpyruvate + UDP-N-acetyl-alpha-D-glucosamine = UDP-N-acetyl-3-O-(1-carboxyvinyl)-alpha-D-glucosamine + phosphate. It functions in the pathway cell wall biogenesis; peptidoglycan biosynthesis. Its function is as follows. Cell wall formation. Adds enolpyruvyl to UDP-N-acetylglucosamine. This Nitrobacter winogradskyi (strain ATCC 25391 / DSM 10237 / CIP 104748 / NCIMB 11846 / Nb-255) protein is UDP-N-acetylglucosamine 1-carboxyvinyltransferase.